Consider the following 88-residue polypeptide: Small ribosomal subunit protein uS17 (88 aa).

It belongs to the universal ribosomal protein uS17 family. As to quaternary structure, part of the 30S ribosomal subunit.

One of the primary rRNA binding proteins, it binds specifically to the 5'-end of 16S ribosomal RNA. This is Small ribosomal subunit protein uS17 from Teredinibacter turnerae (strain ATCC 39867 / T7901).